A 211-amino-acid polypeptide reads, in one-letter code: Urease accessory protein UreG (211 aa).

Residue 11–18 participates in GTP binding; that stretch reads GPVGSGKT.

It belongs to the SIMIBI class G3E GTPase family. UreG subfamily. As to quaternary structure, homodimer. UreD, UreF and UreG form a complex that acts as a GTP-hydrolysis-dependent molecular chaperone, activating the urease apoprotein by helping to assemble the nickel containing metallocenter of UreC. The UreE protein probably delivers the nickel.

The protein localises to the cytoplasm. Functionally, facilitates the functional incorporation of the urease nickel metallocenter. This process requires GTP hydrolysis, probably effectuated by UreG. This Photorhabdus laumondii subsp. laumondii (strain DSM 15139 / CIP 105565 / TT01) (Photorhabdus luminescens subsp. laumondii) protein is Urease accessory protein UreG.